The sequence spans 197 residues: Proteinase inhibitor type-2 (197 aa).

The N-terminal stretch at 1-24 (MAVHKVSFVAHLLVLGMFLLLVDA) is a signal peptide. Tandem repeats lie at residues 24 to 80 (AKAC…DPKN), 81 to 140 (PNVC…DEPK), and 141 to 196 (SCTT…PQSA). Cystine bridges form between C27–C115, C31–C111, C39–C121, C51–C88, C54–C72, C55–C84, C61–C97, and C114–C132.

It belongs to the protease inhibitor I20 (potato type II proteinase inhibitor) family.

In Nicotiana tabacum (Common tobacco), this protein is Proteinase inhibitor type-2.